A 525-amino-acid polypeptide reads, in one-letter code: Mitochondrial-processing peptidase subunit alpha (525 aa).

The N-terminal 33 residues, 1 to 33 (MAAMVLAATRLLRGSGSWGRSRPRFGDPAYRRF), are a transit peptide targeting the mitochondrion. Position 64 is an N6-succinyllysine (Lys-64). Residue Lys-299 is modified to N6-acetyllysine.

It belongs to the peptidase M16 family. In terms of assembly, heterodimer of PMPCA (alpha) and PMPCB (beta) subunits, forming the mitochondrial processing protease (MPP) in which PMPCA is involved in substrate recognition and binding and PMPCB is the catalytic subunit.

It is found in the mitochondrion matrix. The protein resides in the mitochondrion inner membrane. Functionally, substrate recognition and binding subunit of the essential mitochondrial processing protease (MPP), which cleaves the mitochondrial sequence off newly imported precursors proteins. The chain is Mitochondrial-processing peptidase subunit alpha (PMPCA) from Bos taurus (Bovine).